The chain runs to 170 residues: Large ribosomal subunit protein uL11 (170 aa).

It belongs to the universal ribosomal protein uL11 family. Part of the ribosomal stalk of the 50S ribosomal subunit. Interacts with L10 and the large rRNA to form the base of the stalk. L10 forms an elongated spine to which L12 dimers bind in a sequential fashion forming a multimeric L10(L12)X complex.

Functionally, forms part of the ribosomal stalk which helps the ribosome interact with GTP-bound translation factors. The sequence is that of Large ribosomal subunit protein uL11 from Saccharolobus solfataricus (strain ATCC 35092 / DSM 1617 / JCM 11322 / P2) (Sulfolobus solfataricus).